The sequence spans 181 residues: MSTETLELIKNSIKSVPDYPKAGIMFRDVTSLMEDPKAYQATIQLLVEKYKQGGFTKIVGTEARGFLFGAPLALELGVGFVPVRKPGKLPRPTIAQTYDLEYGTDTLEIHTDAIVEGDKVLVVDDLLATGGTIEATVKLIRQLGGDVQHAAFVINLPEIGGETRLEGLGLNVYSICEFPGH.

The protein belongs to the purine/pyrimidine phosphoribosyltransferase family. Homodimer.

It localises to the cytoplasm. It catalyses the reaction AMP + diphosphate = 5-phospho-alpha-D-ribose 1-diphosphate + adenine. It participates in purine metabolism; AMP biosynthesis via salvage pathway; AMP from adenine: step 1/1. Its function is as follows. Catalyzes a salvage reaction resulting in the formation of AMP, that is energically less costly than de novo synthesis. The protein is Adenine phosphoribosyltransferase of Aliivibrio salmonicida (strain LFI1238) (Vibrio salmonicida (strain LFI1238)).